The sequence spans 431 residues: Asparagine--tRNA ligase (431 aa).

The protein belongs to the class-II aminoacyl-tRNA synthetase family.

It localises to the cytoplasm. The catalysed reaction is tRNA(Asn) + L-asparagine + ATP = L-asparaginyl-tRNA(Asn) + AMP + diphosphate + H(+). This is Asparagine--tRNA ligase from Thermococcus kodakarensis (strain ATCC BAA-918 / JCM 12380 / KOD1) (Pyrococcus kodakaraensis (strain KOD1)).